The following is a 352-amino-acid chain: UDP-N-acetylglucosamine--N-acetylmuramyl-(pentapeptide) pyrophosphoryl-undecaprenol N-acetylglucosamine transferase (352 aa).

2 residues coordinate UDP-N-acetyl-alpha-D-glucosamine: Ser-195 and Gln-287.

The protein belongs to the glycosyltransferase 28 family. MurG subfamily.

It localises to the cell membrane. The catalysed reaction is Mur2Ac(oyl-L-Ala-gamma-D-Glu-L-Lys-D-Ala-D-Ala)-di-trans,octa-cis-undecaprenyl diphosphate + UDP-N-acetyl-alpha-D-glucosamine = beta-D-GlcNAc-(1-&gt;4)-Mur2Ac(oyl-L-Ala-gamma-D-Glu-L-Lys-D-Ala-D-Ala)-di-trans,octa-cis-undecaprenyl diphosphate + UDP + H(+). It participates in cell wall biogenesis; peptidoglycan biosynthesis. In terms of biological role, cell wall formation. Catalyzes the transfer of a GlcNAc subunit on undecaprenyl-pyrophosphoryl-MurNAc-pentapeptide (lipid intermediate I) to form undecaprenyl-pyrophosphoryl-MurNAc-(pentapeptide)GlcNAc (lipid intermediate II). In Streptococcus pneumoniae (strain JJA), this protein is UDP-N-acetylglucosamine--N-acetylmuramyl-(pentapeptide) pyrophosphoryl-undecaprenol N-acetylglucosamine transferase.